Consider the following 268-residue polypeptide: tRNA (guanine-N(1)-)-methyltransferase (268 aa).

S-adenosyl-L-methionine-binding positions include Gly113 and 133 to 138; that span reads IGDYVL. Residues 238–268 form a disordered region; that stretch reads RCPPDPFAHQGPVYEGDQLERPEGGEQGASR.

It belongs to the RNA methyltransferase TrmD family. As to quaternary structure, homodimer.

It localises to the cytoplasm. It carries out the reaction guanosine(37) in tRNA + S-adenosyl-L-methionine = N(1)-methylguanosine(37) in tRNA + S-adenosyl-L-homocysteine + H(+). In terms of biological role, specifically methylates guanosine-37 in various tRNAs. The polypeptide is tRNA (guanine-N(1)-)-methyltransferase (Thermomicrobium roseum (strain ATCC 27502 / DSM 5159 / P-2)).